The primary structure comprises 130 residues: Ribosome-binding factor A (130 aa).

The protein belongs to the RbfA family. Monomer. Binds 30S ribosomal subunits, but not 50S ribosomal subunits or 70S ribosomes.

The protein resides in the cytoplasm. One of several proteins that assist in the late maturation steps of the functional core of the 30S ribosomal subunit. Associates with free 30S ribosomal subunits (but not with 30S subunits that are part of 70S ribosomes or polysomes). Required for efficient processing of 16S rRNA. May interact with the 5'-terminal helix region of 16S rRNA. The chain is Ribosome-binding factor A from Prochlorococcus marinus (strain MIT 9312).